A 604-amino-acid polypeptide reads, in one-letter code: 3-hydroxy-3-methylglutaryl-coenzyme A reductase (604 aa).

The tract at residues 1 to 31 (MDVRRRSEKPAYPTKEFAAGEKPLKPHKQQQ) is disordered. Helical transmembrane passes span 40–62 (ASDALPLPLYLTNGLFFTMFFSV) and 90–110 (AIASLIASVIYLLGFFGIGFV). The tract at residues 111-189 (QSFVSRDNND…PLVTPAASEE (79 aa)) is linker. The tract at residues 190–604 (DEEIIKSVVQ…STKDVTKASS (415 aa)) is catalytic. Residue Glu-283 is the Charge relay system of the active site. Asn-347 carries N-linked (GlcNAc...) asparagine glycosylation. Lys-415 serves as the catalytic Charge relay system. The N-linked (GlcNAc...) asparagine glycan is linked to Asn-460. The Charge relay system role is filled by Asp-491. The active-site Proton donor is the His-589. Asn-593 carries N-linked (GlcNAc...) asparagine glycosylation.

The protein belongs to the HMG-CoA reductase family. As to expression, found in protoplasts and leaves submitted to stress. Low levels found in apexes, anthers and roots.

It localises to the endoplasmic reticulum membrane. It catalyses the reaction (R)-mevalonate + 2 NADP(+) + CoA = (3S)-3-hydroxy-3-methylglutaryl-CoA + 2 NADPH + 2 H(+). It participates in metabolic intermediate biosynthesis; (R)-mevalonate biosynthesis; (R)-mevalonate from acetyl-CoA: step 3/3. Functionally, catalyzes the synthesis of mevalonate, the specific precursor of all isoprenoid compounds present in plants. Possible role in plant defense mechanisms as well as in the cell cycle. This is 3-hydroxy-3-methylglutaryl-coenzyme A reductase (HMGR) from Nicotiana sylvestris (Wood tobacco).